The primary structure comprises 59 residues: Conotoxin mr5a (59 aa).

An N-terminal signal peptide occupies residues methionine 1–alanine 22. The propeptide occupies arginine 23–aspartate 48.

Post-translationally, contains 2 disulfide bonds that can be either 'C1-C3, C2-C4' or 'C1-C4, C2-C3', since these disulfide connectivities have been observed for conotoxins with cysteine framework V (for examples, see AC P0DQQ7 and AC P81755). Expressed by the venom duct.

It localises to the secreted. The sequence is that of Conotoxin mr5a from Conus marmoreus (Marble cone).